We begin with the raw amino-acid sequence, 409 residues long: MIPGNRMLMVVLLCQVLLGGASHASLIPETGKKKVAEIQGHAGGRRSGQSHELLRDFEATLLQMFGLRRHPQPSKSAVIPDYMRDLYRLQSGEEEEEEQMPSGGLEYPERPASRANTVRSFHHEEHLENIPGTSENSAFRFLFNLSSIPENEAISSAELRLFREQVDQGPDWERGFHRINIYEVMKPPAEAVPGHLITRLLDTRLVHHNVTRWETFDVSPAVLRWTREKQPNHGLAVEVTHFHHTRTHQGQHVRLSRSLLQGSGDWAQFRPLLVTFGHDGRGHALTRRRRAKRSLKHHPQRARKKNKNCRRHALYVDFSDVGWNDWIVAPPGYQAFYCHGDCPFPLADHFNSTNHAIVQTLVNSVNSSIPKACCVPTELSAISMLYLDEYDKVVLKNYQEMVVEGCGCR.

The first 19 residues, 1–19 (MIPGNRMLMVVLLCQVLLG), serve as a signal peptide directing secretion. The propeptide occupies 20-293 (GASHASLIPE…ALTRRRRAKR (274 aa)). Serine 91 carries the phosphoserine modification. Positions 91 to 110 (SGEEEEEEQMPSGGLEYPER) are disordered. N-linked (GlcNAc...) asparagine glycans are attached at residues asparagine 144, asparagine 209, asparagine 351, and asparagine 366. 3 disulfide bridges follow: cysteine 309/cysteine 374, cysteine 338/cysteine 406, and cysteine 342/cysteine 408.

This sequence belongs to the TGF-beta family. As to quaternary structure, homodimer; disulfide-linked. Interacts with GREM2. Part of a complex consisting of TWSG1 and CHRD. Interacts with the serine proteases, HTRA1 and HTRA3; the interaction with either inhibits BMP4-mediated signaling. The HTRA protease activity is required for this inhibition. Interacts with SOSTDC1. Interacts with FBN1 (via N-terminal domain) and FBN2. Interacts with type I receptor BMPR1A. Interacts with type II receptor BMPR2. Interacts with FSTL1; this interaction inhibits the activation of the BMP4/Smad1/5/8 signaling pathway. Interacts with SCUBE3. Interacts with TGFBR3.

The protein resides in the secreted. Its subcellular location is the extracellular space. The protein localises to the extracellular matrix. In terms of biological role, growth factor of the TGF-beta superfamily that plays essential roles in many developmental processes, including neurogenesis, vascular development, angiogenesis and osteogenesis. Acts in concert with PTHLH/PTHRP to stimulate ductal outgrowth during embryonic mammary development and to inhibit hair follicle induction. Initiates the canonical BMP signaling cascade by associating with type I receptor BMPR1A and type II receptor BMPR2. Once all three components are bound together in a complex at the cell surface, BMPR2 phosphorylates and activates BMPR1A. In turn, BMPR1A propagates signal by phosphorylating SMAD1/5/8 that travel to the nucleus and act as activators and repressors of transcription of target genes. Positively regulates the expression of odontogenic development regulator MSX1 via inducing the IPO7-mediated import of SMAD1 to the nucleus. Required for MSX1-mediated mesenchymal molar tooth bud development beyond the bud stage, via promoting Wnt signaling. Acts as a positive regulator of odontoblast differentiation during mesenchymal tooth germ formation, expression is repressed during the bell stage by MSX1-mediated inhibition of CTNNB1 signaling. Able to induce its own expression in dental mesenchymal cells and also in the neighboring dental epithelial cells via an MSX1-mediated pathway. Can also signal through non-canonical BMP pathways such as ERK/MAP kinase, PI3K/Akt, or SRC cascades. For example, induces SRC phosphorylation which, in turn, activates VEGFR2, leading to an angiogenic response. In Oryctolagus cuniculus (Rabbit), this protein is Bone morphogenetic protein 4 (BMP4).